Reading from the N-terminus, the 195-residue chain is Interferon omega-1 (195 aa).

Positions 1-21 form a signal peptide, or 23 in some molecules; that stretch reads MALLFPLLAALVMTSYSPVGS. 2 cysteine pairs are disulfide-bonded: C24-C122 and C52-C162. N101 carries an N-linked (GlcNAc...) asparagine glycan.

It belongs to the alpha/beta interferon family.

It is found in the secreted. This is Interferon omega-1 (IFNW1) from Homo sapiens (Human).